Reading from the N-terminus, the 192-residue chain is Ras-like GTP-binding protein Rho1 (192 aa).

Position 12–19 (12–19 (GDGACGKT)) interacts with GTP. An Effector region motif is present at residues 34–42 (YVPTVFENY). Residues 59-63 (DTAGQ) and 117-120 (NKKD) each bind GTP. C189 carries the cysteine methyl ester modification. Residue C189 is the site of S-geranylgeranyl cysteine attachment. Positions 190–192 (LLL) are cleaved as a propeptide — removed in mature form.

It belongs to the small GTPase superfamily. Rho family. In terms of assembly, interacts with capu. Interacts (via REM repeats) with Pkn (via N-terminus). Interacts (via N-terminus) with wash (via N-terminus). May interact with dia/diaphanous (via CBD/FH3 domain). Expressed in hemocytes (at protein level).

The protein localises to the cell membrane. It is found in the cytoplasm. It localises to the cytoskeleton. The protein resides in the apical cell membrane. Its subcellular location is the lateral cell membrane. In terms of biological role, has a role in regulating actin cytoskeletal organization: required during early development for proper execution of morphogenetic movements of individual cells and groups of cells important for the formation of the embryonic body plan. Plays a role in regulating dorsal closure during embryogenesis. During axis elongation, required for Rho-kinase Rok planar polarity and adherens junction localization as well as for generating a planar polarized distribution of the actin-binding protein Shrm. During embryogenesis, acts upstream of wash to regulate the developmental migration of tail hemocytes anteriorly along the ventral midline. May have a role in eye development. Involved in targeted recruitment of dia/diaphanous to apical membranes of polarized epithelial cells. This is Ras-like GTP-binding protein Rho1 from Drosophila melanogaster (Fruit fly).